Here is a 121-residue protein sequence, read N- to C-terminus: NAD(P)H-quinone oxidoreductase subunit M (121 aa).

Belongs to the complex I NdhM subunit family. In terms of assembly, NDH-1 can be composed of about 15 different subunits; different subcomplexes with different compositions have been identified which probably have different functions.

Its subcellular location is the cellular thylakoid membrane. The enzyme catalyses a plastoquinone + NADH + (n+1) H(+)(in) = a plastoquinol + NAD(+) + n H(+)(out). It catalyses the reaction a plastoquinone + NADPH + (n+1) H(+)(in) = a plastoquinol + NADP(+) + n H(+)(out). NDH-1 shuttles electrons from an unknown electron donor, via FMN and iron-sulfur (Fe-S) centers, to quinones in the respiratory and/or the photosynthetic chain. The immediate electron acceptor for the enzyme in this species is believed to be plastoquinone. Couples the redox reaction to proton translocation, and thus conserves the redox energy in a proton gradient. Cyanobacterial NDH-1 also plays a role in inorganic carbon-concentration. This Nostoc punctiforme (strain ATCC 29133 / PCC 73102) protein is NAD(P)H-quinone oxidoreductase subunit M.